A 654-amino-acid chain; its full sequence is NADH-ubiquinone oxidoreductase chain 5 (654 aa).

A run of 16 helical transmembrane segments spans residues 1-21 (MYLA…FLGR), 30-50 (LITC…FYEV), 76-96 (FIYD…SALV), 113-133 (FFAY…GDNY), 135-155 (VMFI…NFWF), 178-198 (FSIG…TTVF), 200-220 (LAPF…LVAA), 241-261 (TPVS…YLLL), 274-294 (LILI…TGLL), 301-320 (VIAY…CGLS), 324-346 (VALF…AGSV), 365-385 (LLPF…ALPF), 406-426 (SGNL…MYSI), 451-471 (PLIM…FGYV), 510-530 (FLPL…YWIF), and 612-632 (TYAM…FFIG).

The protein belongs to the complex I subunit 5 family.

The protein resides in the mitochondrion inner membrane. It carries out the reaction a ubiquinone + NADH + 5 H(+)(in) = a ubiquinol + NAD(+) + 4 H(+)(out). Functionally, core subunit of the mitochondrial membrane respiratory chain NADH dehydrogenase (Complex I) that is believed to belong to the minimal assembly required for catalysis. Complex I functions in the transfer of electrons from NADH to the respiratory chain. The immediate electron acceptor for the enzyme is believed to be ubiquinone. The polypeptide is NADH-ubiquinone oxidoreductase chain 5 (ND5) (Rhizopus stolonifer (Rhizopus nigricans)).